The following is a 78-amino-acid chain: Large ribosomal subunit protein bL28 (78 aa).

The protein belongs to the bacterial ribosomal protein bL28 family.

The protein is Large ribosomal subunit protein bL28 of Pectobacterium carotovorum subsp. carotovorum (strain PC1).